Here is a 297-residue protein sequence, read N- to C-terminus: Elongation factor Ts (297 aa).

The interval 82–85 is involved in Mg(2+) ion dislocation from EF-Tu; sequence TDFV.

This sequence belongs to the EF-Ts family.

It localises to the cytoplasm. In terms of biological role, associates with the EF-Tu.GDP complex and induces the exchange of GDP to GTP. It remains bound to the aminoacyl-tRNA.EF-Tu.GTP complex up to the GTP hydrolysis stage on the ribosome. The protein is Elongation factor Ts of Azoarcus sp. (strain BH72).